The following is a 356-amino-acid chain: MAFSGCQAPYLSPAVPFSGTIQGGLQDGFQITVNGAVLSCSGTRFAVDFQTGFSGNDIAFHFNPRFEDGGYVVCNTRQKGTWGPEERKMHMPFQKGMPFDLCFLVQSSDFKVMVNGSLFVQYFHRVPFHRVDTISVNGSVQLSYISFQNPRAVPVQPAFSTVPFSQPVCFPPRPRGRRQKPPSVRPANPAPITQTVIHTVQSASGQMFSQTPAIPPMMYPHPAYPMPFITTIPGGLYPSKSIILSGTVLPSAQRFHINLCSGSHIAFHMNPRFDENAVVRNTQINNSWGSEERSLPRKMPFVRGQSFSVWILCEAHCLKVAVDGQHVFEYYHRLRNLPTINKLEVGGDIQLTHVQT.

A Galectin 1 domain is found at 17 to 148 (FSGTIQGGLQ…SVQLSYISFQ (132 aa)). Residue 82 to 88 (WGPEERK) participates in a beta-D-galactoside binding. A disordered region spans residues 170 to 190 (FPPRPRGRRQKPPSVRPANPA). The Galectin 2 domain occupies 228–356 (FITTIPGGLY…GDIQLTHVQT (129 aa)). A beta-D-galactoside is bound at residue 288-294 (WGSEERS).

Binds galactosides. The chain is Galectin-9C (LGALS9C) from Homo sapiens (Human).